The chain runs to 181 residues: Inner membrane-spanning protein YciB (181 aa).

Transmembrane regions (helical) follow at residues 22-42 (IYTA…LTYV), 50-70 (MQLI…FLHD), 80-100 (IVYA…RPII), 118-138 (INYA…YVAF), and 148-168 (FKVF…GMYV).

Belongs to the YciB family.

It localises to the cell inner membrane. In terms of biological role, plays a role in cell envelope biogenesis, maintenance of cell envelope integrity and membrane homeostasis. The polypeptide is Inner membrane-spanning protein YciB (Aliivibrio salmonicida (strain LFI1238) (Vibrio salmonicida (strain LFI1238))).